We begin with the raw amino-acid sequence, 159 residues long: Ecotin (159 aa).

Residues 1 to 22 form the signal peptide; that stretch reads MRPTPMTAILALTLAAAAPAMA. Cys68 and Cys105 are joined by a disulfide.

It belongs to the protease inhibitor I11 (ecotin) family. Homodimer.

It localises to the periplasm. General inhibitor of family S1 serine proteases. The polypeptide is Ecotin (Pseudomonas putida (strain GB-1)).